Here is a 542-residue protein sequence, read N- to C-terminus: CTP synthase (542 aa).

The tract at residues Met1–Ile265 is amidoligase domain. Ser13 provides a ligand contact to CTP. Ser13 is a UTP binding site. Ser14–Ile19 contributes to the ATP binding site. Tyr54 is a binding site for L-glutamine. Asp71 is an ATP binding site. Residues Asp71 and Glu139 each contribute to the Mg(2+) site. Residues Asp146–Glu148, Lys186–Gln191, and Lys222 each bind CTP. UTP-binding positions include Lys186–Gln191 and Lys222. Positions Thr291–Leu541 constitute a Glutamine amidotransferase type-1 domain. Ala353 provides a ligand contact to L-glutamine. The active-site Nucleophile; for glutamine hydrolysis is the Cys380. L-glutamine is bound by residues Phe381–Gln384, Glu404, and Arg469. Residues His514 and Glu516 contribute to the active site.

Belongs to the CTP synthase family. As to quaternary structure, homotetramer.

The catalysed reaction is UTP + L-glutamine + ATP + H2O = CTP + L-glutamate + ADP + phosphate + 2 H(+). It catalyses the reaction L-glutamine + H2O = L-glutamate + NH4(+). The enzyme catalyses UTP + NH4(+) + ATP = CTP + ADP + phosphate + 2 H(+). The protein operates within pyrimidine metabolism; CTP biosynthesis via de novo pathway; CTP from UDP: step 2/2. Its activity is regulated as follows. Allosterically activated by GTP, when glutamine is the substrate; GTP has no effect on the reaction when ammonia is the substrate. The allosteric effector GTP functions by stabilizing the protein conformation that binds the tetrahedral intermediate(s) formed during glutamine hydrolysis. Inhibited by the product CTP, via allosteric rather than competitive inhibition. Its function is as follows. Catalyzes the ATP-dependent amination of UTP to CTP with either L-glutamine or ammonia as the source of nitrogen. Regulates intracellular CTP levels through interactions with the four ribonucleotide triphosphates. The polypeptide is CTP synthase (Bartonella tribocorum (strain CIP 105476 / IBS 506)).